We begin with the raw amino-acid sequence, 188 residues long: Ion-translocating oxidoreductase complex subunit B (188 aa).

Residues 1–23 (MFTAIWVMVGLAIAIGLILGWSA) are hydrophobic. The 4Fe-4S domain occupies 29-88 (EGNPLAEKIDAILPQTQCGQCGFPGCRPYAEAIAKGEADINQCPPGGEEGVKKLAELLGV). Cysteine 46, cysteine 49, cysteine 54, cysteine 71, cysteine 113, cysteine 116, cysteine 119, cysteine 123, cysteine 143, cysteine 146, cysteine 149, and cysteine 153 together coordinate [4Fe-4S] cluster. 4Fe-4S ferredoxin-type domains are found at residues 104–133 (SVAF…GAAK) and 134–163 (QMHT…MVPI).

It belongs to the 4Fe4S bacterial-type ferredoxin family. RnfB subfamily. The complex is composed of six subunits: RnfA, RnfB, RnfC, RnfD, RnfE and RnfG. It depends on [4Fe-4S] cluster as a cofactor.

The protein resides in the cell inner membrane. Part of a membrane-bound complex that couples electron transfer with translocation of ions across the membrane. This is Ion-translocating oxidoreductase complex subunit B from Thiobacillus denitrificans (strain ATCC 25259 / T1).